An 89-amino-acid chain; its full sequence is Sec-independent protein translocase protein TatA (89 aa).

Residues 1–21 traverse the membrane as a helical segment; it reads MGGISIWQLLIIAVIVVLLFG. Residues 65–89 are disordered; that stretch reads ADKQADTNQEQAKTEDAKRHDKEQV. Positions 76–89 are enriched in basic and acidic residues; it reads AKTEDAKRHDKEQV.

The protein belongs to the TatA/E family. The Tat system comprises two distinct complexes: a TatABC complex, containing multiple copies of TatA, TatB and TatC subunits, and a separate TatA complex, containing only TatA subunits. Substrates initially bind to the TatABC complex, which probably triggers association of the separate TatA complex to form the active translocon.

The protein localises to the cell inner membrane. Part of the twin-arginine translocation (Tat) system that transports large folded proteins containing a characteristic twin-arginine motif in their signal peptide across membranes. TatA could form the protein-conducting channel of the Tat system. This Shigella flexneri protein is Sec-independent protein translocase protein TatA.